Consider the following 668-residue polypeptide: Metastasis-associated protein MTA2 (668 aa).

Residues 1-144 enclose the BAH domain; sequence MAANMYRVGD…PVQKTLLADQ (144 aa). Phosphoserine occurs at positions 52 and 54. The 112-residue stretch at 145-256 folds into the ELM2 domain; sequence GEIRVGCKYQ…KAMSTLVPQG (112 aa). Residue K152 is modified to N6-acetyllysine. The SANT domain maps to 263-315; it reads DEMEEWSASEAMLFEEALEKYGKDFNDIRQDFLPWKSLASIVQFYYMWKTTDR. The segment at 367 to 394 adopts a GATA-type; atypical zinc-finger fold; it reads CESCHTTQSAQWYAWGPPNMQCRLCASC. Residues 409 to 419 show a composition bias toward polar residues; it reads QLEGATRGTTE. Positions 409–437 are disordered; that stretch reads QLEGATRGTTEPHSRGHLSRPEAQSLSPY. 2 positions are modified to phosphoserine: S433 and S435. Residue K460 is modified to N6-acetyllysine. A Glycyl lysine isopeptide (Lys-Gly) (interchain with G-Cter in SUMO2 and SUMO3); alternate cross-link involves residue K492. K492 participates in a covalent cross-link: Glycyl lysine isopeptide (Lys-Gly) (interchain with G-Cter in SUMO2); alternate. K508 participates in a covalent cross-link: Glycyl lysine isopeptide (Lys-Gly) (interchain with G-Cter in SUMO2). K522 and K531 each carry N6-acetyllysine. At T534 the chain carries Phosphothreonine. A Phosphoserine modification is found at S548. Residues K559 and K595 each participate in a glycyl lysine isopeptide (Lys-Gly) (interchain with G-Cter in SUMO2) cross-link. Disordered stretches follow at residues 580-599 and 647-668; these read ASGI…LNPA and PPVP…VLED.

Belongs to the metastasis-associated protein family. In terms of assembly, component of the nucleosome remodeling and deacetylase (NuRD) repressor complex, composed of core proteins MTA1, MTA2, MTA3, RBBP4, RBBP7, HDAC1, HDAC2, MBD2, MBD3, and peripherally associated proteins CDK2AP1, CDK2AP2, GATAD2A, GATAD2B, CHD3, CHD4 and CHD5. The exact stoichiometry of the NuRD complex is unknown, and some subunits such as MBD2 and MBD3, GATAD2A and GATAD2B, and CHD3, CHD4 and CHD5 define mutually exclusive NuRD complexes. Interacts with CHD3. Interacts with CHD4. Interacts with GATAD2A. Interacts with HDAC7. Interacts with MBD3. Interacts with p53/TP53. Interacts with MINT. Interacts with PIMREG. Interacts with NACC2. Interacts with ERCC6. Interacts with PWWP2B. Interacts with transcription factor BCL11A. In terms of tissue distribution, widely expressed.

The protein localises to the nucleus. Functionally, may function as a transcriptional coregulator. Acts as a component of the histone deacetylase NuRD complex which participates in the remodeling of chromatin. This is Metastasis-associated protein MTA2 (MTA2) from Homo sapiens (Human).